The primary structure comprises 251 residues: Ubiquinone/menaquinone biosynthesis C-methyltransferase UbiE (251 aa).

Residues T74, D95, 123–124 (NA), and S140 contribute to the S-adenosyl-L-methionine site.

Belongs to the class I-like SAM-binding methyltransferase superfamily. MenG/UbiE family.

The enzyme catalyses a 2-demethylmenaquinol + S-adenosyl-L-methionine = a menaquinol + S-adenosyl-L-homocysteine + H(+). It carries out the reaction a 2-methoxy-6-(all-trans-polyprenyl)benzene-1,4-diol + S-adenosyl-L-methionine = a 5-methoxy-2-methyl-3-(all-trans-polyprenyl)benzene-1,4-diol + S-adenosyl-L-homocysteine + H(+). The protein operates within quinol/quinone metabolism; menaquinone biosynthesis; menaquinol from 1,4-dihydroxy-2-naphthoate: step 2/2. It functions in the pathway cofactor biosynthesis; ubiquinone biosynthesis. In terms of biological role, methyltransferase required for the conversion of demethylmenaquinol (DMKH2) to menaquinol (MKH2) and the conversion of 2-polyprenyl-6-methoxy-1,4-benzoquinol (DDMQH2) to 2-polyprenyl-3-methyl-6-methoxy-1,4-benzoquinol (DMQH2). The polypeptide is Ubiquinone/menaquinone biosynthesis C-methyltransferase UbiE (Klebsiella pneumoniae subsp. pneumoniae (strain ATCC 700721 / MGH 78578)).